The chain runs to 37 residues: Cytochrome b6-f complex subunit 5 (37 aa).

The helical transmembrane segment at 5-25 (LLSGIVLGLIPVTLAGLFVTA) threads the bilayer.

This sequence belongs to the PetG family. As to quaternary structure, the 4 large subunits of the cytochrome b6-f complex are cytochrome b6, subunit IV (17 kDa polypeptide, PetD), cytochrome f and the Rieske protein, while the 4 small subunits are PetG, PetL, PetM and PetN. The complex functions as a dimer.

The protein resides in the plastid. It is found in the chloroplast thylakoid membrane. Functionally, component of the cytochrome b6-f complex, which mediates electron transfer between photosystem II (PSII) and photosystem I (PSI), cyclic electron flow around PSI, and state transitions. PetG is required for either the stability or assembly of the cytochrome b6-f complex. The chain is Cytochrome b6-f complex subunit 5 from Chlorokybus atmophyticus (Soil alga).